The sequence spans 260 residues: Small ribosomal subunit protein eS4 (260 aa).

Residues 46-111 (VPLLILVRDM…RYRVVMNEHH (66 aa)) form the S4 RNA-binding domain.

Belongs to the eukaryotic ribosomal protein eS4 family.

This is Small ribosomal subunit protein eS4 from Methanopyrus kandleri (strain AV19 / DSM 6324 / JCM 9639 / NBRC 100938).